Reading from the N-terminus, the 211-residue chain is Thiamine-phosphate synthase (211 aa).

4-amino-2-methyl-5-(diphosphooxymethyl)pyrimidine is bound by residues 36–40 and asparagine 68; that span reads QLREK. 2 residues coordinate Mg(2+): aspartate 69 and aspartate 88. Serine 107 provides a ligand contact to 4-amino-2-methyl-5-(diphosphooxymethyl)pyrimidine. A 2-[(2R,5Z)-2-carboxy-4-methylthiazol-5(2H)-ylidene]ethyl phosphate-binding site is contributed by 133-135; it reads TGS. Lysine 136 provides a ligand contact to 4-amino-2-methyl-5-(diphosphooxymethyl)pyrimidine. 2-[(2R,5Z)-2-carboxy-4-methylthiazol-5(2H)-ylidene]ethyl phosphate-binding positions include glycine 167 and 187–188; that span reads IT.

This sequence belongs to the thiamine-phosphate synthase family. The cofactor is Mg(2+).

The catalysed reaction is 2-[(2R,5Z)-2-carboxy-4-methylthiazol-5(2H)-ylidene]ethyl phosphate + 4-amino-2-methyl-5-(diphosphooxymethyl)pyrimidine + 2 H(+) = thiamine phosphate + CO2 + diphosphate. The enzyme catalyses 2-(2-carboxy-4-methylthiazol-5-yl)ethyl phosphate + 4-amino-2-methyl-5-(diphosphooxymethyl)pyrimidine + 2 H(+) = thiamine phosphate + CO2 + diphosphate. It catalyses the reaction 4-methyl-5-(2-phosphooxyethyl)-thiazole + 4-amino-2-methyl-5-(diphosphooxymethyl)pyrimidine + H(+) = thiamine phosphate + diphosphate. Its pathway is cofactor biosynthesis; thiamine diphosphate biosynthesis; thiamine phosphate from 4-amino-2-methyl-5-diphosphomethylpyrimidine and 4-methyl-5-(2-phosphoethyl)-thiazole: step 1/1. In terms of biological role, condenses 4-methyl-5-(beta-hydroxyethyl)thiazole monophosphate (THZ-P) and 2-methyl-4-amino-5-hydroxymethyl pyrimidine pyrophosphate (HMP-PP) to form thiamine monophosphate (TMP). This chain is Thiamine-phosphate synthase, found in Haloarcula marismortui (strain ATCC 43049 / DSM 3752 / JCM 8966 / VKM B-1809) (Halobacterium marismortui).